We begin with the raw amino-acid sequence, 343 residues long: Tetraacyldisaccharide 4'-kinase (343 aa).

47–54 provides a ligand contact to ATP; that stretch reads SVGGTGKT.

It belongs to the LpxK family.

It carries out the reaction a lipid A disaccharide + ATP = a lipid IVA + ADP + H(+). It functions in the pathway glycolipid biosynthesis; lipid IV(A) biosynthesis; lipid IV(A) from (3R)-3-hydroxytetradecanoyl-[acyl-carrier-protein] and UDP-N-acetyl-alpha-D-glucosamine: step 6/6. Functionally, transfers the gamma-phosphate of ATP to the 4'-position of a tetraacyldisaccharide 1-phosphate intermediate (termed DS-1-P) to form tetraacyldisaccharide 1,4'-bis-phosphate (lipid IVA). This Flavobacterium psychrophilum (strain ATCC 49511 / DSM 21280 / CIP 103535 / JIP02/86) protein is Tetraacyldisaccharide 4'-kinase.